Consider the following 1375-residue polypeptide: Mediator of RNA polymerase II transcription subunit 13 (1375 aa).

The tract at residues 1 to 51 (MKASEMARPPMRPGNPHAFASPATTPSRTASPNNAQGANVRTTQGGNQAGA) is disordered. Polar residues predominate over residues 22–51 (PATTPSRTASPNNAQGANVRTTQGGNQAGA). 2 coiled-coil regions span residues 182–216 (ADDS…WLSR) and 297–324 (QLER…KDEA). Positions 313–324 (AEEDAMRRKDEA) are enriched in basic and acidic residues. Disordered stretches follow at residues 313-333 (AEED…SSPF), 350-370 (YPTP…DTPS), 397-417 (YTTT…APLE), 537-581 (ATSP…PASL), 660-689 (RAVS…VDTH), 841-862 (QAKG…IPSN), and 1233-1285 (TPTT…AADP). Residues 397–411 (YTTTDNQQHASTSPT) show a composition bias toward polar residues. Residues 666–685 (SASDSESETSDMSEGSPEDP) show a composition bias toward acidic residues. Polar residues predominate over residues 1233–1259 (TPTTPAPSNSSAQANTNTPGSTPQTGV).

The protein belongs to the Mediator complex subunit 13 family. Component of the SRB8-11 complex, which itself associates with the Mediator complex.

The protein localises to the nucleus. In terms of biological role, component of the SRB8-11 complex. The SRB8-11 complex is a regulatory module of the Mediator complex which is itself involved in regulation of basal and activated RNA polymerase II-dependent transcription. The SRB8-11 complex may be involved in the transcriptional repression of a subset of genes regulated by Mediator. It may inhibit the association of the Mediator complex with RNA polymerase II to form the holoenzyme complex. The protein is Mediator of RNA polymerase II transcription subunit 13 (SSN2) of Phaeosphaeria nodorum (strain SN15 / ATCC MYA-4574 / FGSC 10173) (Glume blotch fungus).